We begin with the raw amino-acid sequence, 35 residues long: Photosystem II reaction center protein M (35 aa).

The chain crosses the membrane as a helical span at residues 5-25 (ILAFVATALFILIPTAFLLIL).

It belongs to the PsbM family. As to quaternary structure, PSII is composed of 1 copy each of membrane proteins PsbA, PsbB, PsbC, PsbD, PsbE, PsbF, PsbH, PsbI, PsbJ, PsbK, PsbL, PsbM, PsbT, PsbX, PsbY, PsbZ, Psb30/Ycf12, at least 3 peripheral proteins of the oxygen-evolving complex and a large number of cofactors. It forms dimeric complexes.

It is found in the plastid. It localises to the chloroplast thylakoid membrane. One of the components of the core complex of photosystem II (PSII). PSII is a light-driven water:plastoquinone oxidoreductase that uses light energy to abstract electrons from H(2)O, generating O(2) and a proton gradient subsequently used for ATP formation. It consists of a core antenna complex that captures photons, and an electron transfer chain that converts photonic excitation into a charge separation. This subunit is found at the monomer-monomer interface. This is Photosystem II reaction center protein M from Adiantum capillus-veneris (Maidenhair fern).